Consider the following 689-residue polypeptide: Methionine--tRNA ligase (689 aa).

Positions 16–26 (PYANAGLHLGH) match the 'HIGH' region motif. Zn(2+) contacts are provided by C147, C150, C160, and C163. The 'KMSKS' region signature appears at 342–346 (KMSKS). Residue K345 coordinates ATP. The tRNA-binding domain occupies 585 to 689 (DFAKVDLRVG…AGVKPGMRVG (105 aa)).

This sequence belongs to the class-I aminoacyl-tRNA synthetase family. MetG type 1 subfamily. In terms of assembly, homodimer. It depends on Zn(2+) as a cofactor.

It is found in the cytoplasm. It catalyses the reaction tRNA(Met) + L-methionine + ATP = L-methionyl-tRNA(Met) + AMP + diphosphate. Is required not only for elongation of protein synthesis but also for the initiation of all mRNA translation through initiator tRNA(fMet) aminoacylation. The sequence is that of Methionine--tRNA ligase from Chromobacterium violaceum (strain ATCC 12472 / DSM 30191 / JCM 1249 / CCUG 213 / NBRC 12614 / NCIMB 9131 / NCTC 9757 / MK).